Here is a 256-residue protein sequence, read N- to C-terminus: Thiazole synthase (256 aa).

Catalysis depends on K95, which acts as the Schiff-base intermediate with DXP. 1-deoxy-D-xylulose 5-phosphate contacts are provided by residues G156, 182–183 (AG), and 204–205 (NT).

Belongs to the ThiG family. As to quaternary structure, homotetramer. Forms heterodimers with either ThiH or ThiS.

The protein localises to the cytoplasm. It carries out the reaction [ThiS sulfur-carrier protein]-C-terminal-Gly-aminoethanethioate + 2-iminoacetate + 1-deoxy-D-xylulose 5-phosphate = [ThiS sulfur-carrier protein]-C-terminal Gly-Gly + 2-[(2R,5Z)-2-carboxy-4-methylthiazol-5(2H)-ylidene]ethyl phosphate + 2 H2O + H(+). Its pathway is cofactor biosynthesis; thiamine diphosphate biosynthesis. In terms of biological role, catalyzes the rearrangement of 1-deoxy-D-xylulose 5-phosphate (DXP) to produce the thiazole phosphate moiety of thiamine. Sulfur is provided by the thiocarboxylate moiety of the carrier protein ThiS. In vitro, sulfur can be provided by H(2)S. The chain is Thiazole synthase from Shigella boydii serotype 18 (strain CDC 3083-94 / BS512).